The primary structure comprises 340 residues: Ketol-acid reductoisomerase (NADP(+)) (340 aa).

The KARI N-terminal Rossmann domain occupies 3 to 183 (LSVYYDKDCN…GGGRTGIIET (181 aa)). NADP(+) is bound by residues 26–29 (FGSQ), serine 54, and 84–87 (DELQ). Histidine 109 is an active-site residue. Residue glycine 135 participates in NADP(+) binding. Positions 184 to 329 (TFKDETETDL…ERLRAMMPWI (146 aa)) constitute a KARI C-terminal knotted domain. Mg(2+) is bound by residues aspartate 192, glutamate 196, glutamate 228, and glutamate 232. Serine 253 contributes to the substrate binding site.

Belongs to the ketol-acid reductoisomerase family. Mg(2+) is required as a cofactor.

It carries out the reaction (2R)-2,3-dihydroxy-3-methylbutanoate + NADP(+) = (2S)-2-acetolactate + NADPH + H(+). The enzyme catalyses (2R,3R)-2,3-dihydroxy-3-methylpentanoate + NADP(+) = (S)-2-ethyl-2-hydroxy-3-oxobutanoate + NADPH + H(+). Its pathway is amino-acid biosynthesis; L-isoleucine biosynthesis; L-isoleucine from 2-oxobutanoate: step 2/4. It participates in amino-acid biosynthesis; L-valine biosynthesis; L-valine from pyruvate: step 2/4. Functionally, involved in the biosynthesis of branched-chain amino acids (BCAA). Catalyzes an alkyl-migration followed by a ketol-acid reduction of (S)-2-acetolactate (S2AL) to yield (R)-2,3-dihydroxy-isovalerate. In the isomerase reaction, S2AL is rearranged via a Mg-dependent methyl migration to produce 3-hydroxy-3-methyl-2-ketobutyrate (HMKB). In the reductase reaction, this 2-ketoacid undergoes a metal-dependent reduction by NADPH to yield (R)-2,3-dihydroxy-isovalerate. The polypeptide is Ketol-acid reductoisomerase (NADP(+)) (Wolinella succinogenes (strain ATCC 29543 / DSM 1740 / CCUG 13145 / JCM 31913 / LMG 7466 / NCTC 11488 / FDC 602W) (Vibrio succinogenes)).